Here is a 204-residue protein sequence, read N- to C-terminus: Salt stress root protein RS1 (204 aa).

The interval F128–Q204 is disordered. Basic and acidic residues predominate over residues T147 to E161. Over residues P164–E180 the composition is skewed to low complexity. Basic and acidic residues predominate over residues V182 to A192. Positions E193–Q204 are enriched in low complexity.

Belongs to the DREPP family.

The protein is Salt stress root protein RS1 of Oryza sativa subsp. indica (Rice).